The sequence spans 428 residues: Glutamyl-tRNA reductase (428 aa).

Substrate is bound by residues 49-52, Ser107, 112-114, and Gln118; these read TCNR and EPQ. Residue Cys50 is the Nucleophile of the active site. 187-192 contributes to the NADP(+) binding site; sequence GAGETI.

It belongs to the glutamyl-tRNA reductase family. Homodimer.

It carries out the reaction (S)-4-amino-5-oxopentanoate + tRNA(Glu) + NADP(+) = L-glutamyl-tRNA(Glu) + NADPH + H(+). It participates in porphyrin-containing compound metabolism; protoporphyrin-IX biosynthesis; 5-aminolevulinate from L-glutamyl-tRNA(Glu): step 1/2. Its function is as follows. Catalyzes the NADPH-dependent reduction of glutamyl-tRNA(Glu) to glutamate 1-semialdehyde (GSA). The sequence is that of Glutamyl-tRNA reductase from Pseudomonas fluorescens (strain Pf0-1).